The sequence spans 119 residues: 5-hydroxyisourate hydrolase (119 aa).

Residues H8, R47, and Y116 each coordinate substrate.

This sequence belongs to the transthyretin family. 5-hydroxyisourate hydrolase subfamily. In terms of assembly, homotetramer.

The catalysed reaction is 5-hydroxyisourate + H2O = 5-hydroxy-2-oxo-4-ureido-2,5-dihydro-1H-imidazole-5-carboxylate + H(+). It functions in the pathway purine metabolism; urate degradation; (S)-allantoin from urate: step 2/3. Its function is as follows. Catalyzes the hydrolysis of 5-hydroxyisourate (HIU) to 2-oxo-4-hydroxy-4-carboxy-5-ureidoimidazoline (OHCU). The chain is 5-hydroxyisourate hydrolase from Halalkalibacterium halodurans (strain ATCC BAA-125 / DSM 18197 / FERM 7344 / JCM 9153 / C-125) (Bacillus halodurans).